Reading from the N-terminus, the 196-residue chain is Imidazoleglycerol-phosphate dehydratase (196 aa).

This sequence belongs to the imidazoleglycerol-phosphate dehydratase family.

The protein localises to the cytoplasm. The catalysed reaction is D-erythro-1-(imidazol-4-yl)glycerol 3-phosphate = 3-(imidazol-4-yl)-2-oxopropyl phosphate + H2O. The protein operates within amino-acid biosynthesis; L-histidine biosynthesis; L-histidine from 5-phospho-alpha-D-ribose 1-diphosphate: step 6/9. This Desulforamulus reducens (strain ATCC BAA-1160 / DSM 100696 / MI-1) (Desulfotomaculum reducens) protein is Imidazoleglycerol-phosphate dehydratase.